A 145-amino-acid chain; its full sequence is MPGVTVKDVNQQEFVRALAAFLKKSGKLKVPEWVDTVKLAKHKELAPYDENWFYTRAASTARHLYLRGGAGVGSMTKIYGGRQRNGVMPSHFSRGSKSVARRVLQALEGLKMVEKDQDWGRKLTPQGQRDLDRIAGQVAAAKKKH.

Lys-23 is modified (N6-acetyllysine). Residue Arg-67 is modified to Omega-N-methylarginine. Residues Lys-111 and Lys-115 each carry the N6-acetyllysine modification. Residue Lys-143 is modified to N6-succinyllysine.

It belongs to the eukaryotic ribosomal protein eS19 family. Component of the small ribosomal subunit. Part of the small subunit (SSU) processome, composed of more than 70 proteins and the RNA chaperone small nucleolar RNA (snoRNA) U3. Interacts with RPS19BP1; the interaction is direct and mediates the integration of RPS19 in state post-A1. Interacts with RPS19BP1.

It localises to the cytoplasm. It is found in the nucleus. The protein resides in the nucleolus. Its function is as follows. Component of the small ribosomal subunit. The ribosome is a large ribonucleoprotein complex responsible for the synthesis of proteins in the cell. Required for pre-rRNA processing and maturation of 40S ribosomal subunits. Part of the small subunit (SSU) processome, first precursor of the small eukaryotic ribosomal subunit. During the assembly of the SSU processome in the nucleolus, many ribosome biogenesis factors, an RNA chaperone and ribosomal proteins associate with the nascent pre-rRNA and work in concert to generate RNA folding, modifications, rearrangements and cleavage as well as targeted degradation of pre-ribosomal RNA by the RNA exosome. The polypeptide is Small ribosomal subunit protein eS19 (RPS19) (Oryctolagus cuniculus (Rabbit)).